The primary structure comprises 554 residues: CTP synthase (554 aa).

An amidoligase domain region spans residues 1-265; it reads MTPLIFVTGG…DEIVIDQFKL (265 aa). Ser-13 lines the CTP pocket. A UTP-binding site is contributed by Ser-13. Residues 14–19 and Asp-71 each bind ATP; that span reads SLGKGI. Residues Asp-71 and Glu-139 each coordinate Mg(2+). CTP is bound by residues 146–148, 186–191, and Lys-222; these read DIE and KTKPTQ. UTP contacts are provided by residues 186 to 191 and Lys-222; that span reads KTKPTQ. A Glutamine amidotransferase type-1 domain is found at 292–545; the sequence is TIAVVGKYVD…VKASRARKAG (254 aa). Gly-353 contacts L-glutamine. Residue Cys-380 is the Nucleophile; for glutamine hydrolysis of the active site. Residues 381-384, Glu-404, and Arg-471 each bind L-glutamine; that span reads YGMQ. Residues His-518 and Glu-520 contribute to the active site.

This sequence belongs to the CTP synthase family. In terms of assembly, homotetramer.

The catalysed reaction is UTP + L-glutamine + ATP + H2O = CTP + L-glutamate + ADP + phosphate + 2 H(+). It carries out the reaction L-glutamine + H2O = L-glutamate + NH4(+). The enzyme catalyses UTP + NH4(+) + ATP = CTP + ADP + phosphate + 2 H(+). It functions in the pathway pyrimidine metabolism; CTP biosynthesis via de novo pathway; CTP from UDP: step 2/2. Allosterically activated by GTP, when glutamine is the substrate; GTP has no effect on the reaction when ammonia is the substrate. The allosteric effector GTP functions by stabilizing the protein conformation that binds the tetrahedral intermediate(s) formed during glutamine hydrolysis. Inhibited by the product CTP, via allosteric rather than competitive inhibition. Catalyzes the ATP-dependent amination of UTP to CTP with either L-glutamine or ammonia as the source of nitrogen. Regulates intracellular CTP levels through interactions with the four ribonucleotide triphosphates. The sequence is that of CTP synthase from Xylella fastidiosa (strain M23).